The following is a 105-amino-acid chain: Large ribosomal subunit protein uL24 (105 aa).

The protein belongs to the universal ribosomal protein uL24 family. Part of the 50S ribosomal subunit.

One of two assembly initiator proteins, it binds directly to the 5'-end of the 23S rRNA, where it nucleates assembly of the 50S subunit. Its function is as follows. One of the proteins that surrounds the polypeptide exit tunnel on the outside of the subunit. The sequence is that of Large ribosomal subunit protein uL24 from Xylella fastidiosa (strain M23).